We begin with the raw amino-acid sequence, 90 residues long: Large ribosomal subunit protein eL31 (90 aa).

The protein belongs to the eukaryotic ribosomal protein eL31 family.

The protein is Large ribosomal subunit protein eL31 of Natronomonas pharaonis (strain ATCC 35678 / DSM 2160 / CIP 103997 / JCM 8858 / NBRC 14720 / NCIMB 2260 / Gabara) (Halobacterium pharaonis).